Here is a 124-residue protein sequence, read N- to C-terminus: Nascent polypeptide-associated complex protein (124 aa).

Positions 7-74 constitute an NAC-A/B domain; that stretch reads GLNPRKMKQM…PESRERGDSG (68 aa). The disordered stretch occupies residues 53–124; that stretch reads AQGQQTYQVV…DLAAAVQKLE (72 aa). Acidic residues predominate over residues 74–93; sequence GSEDDSETESGGEFSEDDVE.

Belongs to the NAC-alpha family. In terms of assembly, homodimer. Interacts with the ribosome. Binds ribosomal RNA.

In terms of biological role, contacts the emerging nascent chain on the ribosome. The sequence is that of Nascent polypeptide-associated complex protein from Natronomonas pharaonis (strain ATCC 35678 / DSM 2160 / CIP 103997 / JCM 8858 / NBRC 14720 / NCIMB 2260 / Gabara) (Halobacterium pharaonis).